Consider the following 135-residue polypeptide: Small ribosomal subunit protein eS6 (135 aa).

The protein belongs to the eukaryotic ribosomal protein eS6 family.

This Methanospirillum hungatei JF-1 (strain ATCC 27890 / DSM 864 / NBRC 100397 / JF-1) protein is Small ribosomal subunit protein eS6.